A 134-amino-acid chain; its full sequence is Profilin-3 (134 aa).

Cys-13 and Cys-118 are oxidised to a cystine. Residues 84–100 (AVIRGKKGSGGITIKKT) carry the Involved in PIP2 interaction motif. Residue Thr-114 is modified to Phosphothreonine.

It belongs to the profilin family. In terms of assembly, occurs in many kinds of cells as a complex with monomeric actin in a 1:1 ratio. Phosphorylated by MAP kinases.

It is found in the cytoplasm. The protein resides in the cytoskeleton. In terms of biological role, binds to actin and affects the structure of the cytoskeleton. At high concentrations, profilin prevents the polymerization of actin, whereas it enhances it at low concentrations. This Olea europaea (Common olive) protein is Profilin-3.